The primary structure comprises 120 residues: Putative cysteine proteinase inhibitor 11 (120 aa).

A signal peptide spans 1 to 24; the sequence is MARHPGLLLILLAAVAAVATTSRA. The Secondary area of contact motif lies at 73–77; sequence QVVQG.

This sequence belongs to the cystatin family. Phytocystatin subfamily.

The protein localises to the secreted. Functionally, specific inhibitor of cysteine proteinases. Probably involved in the regulation of endogenous processes and in defense against pests and pathogens. In Oryza sativa subsp. japonica (Rice), this protein is Putative cysteine proteinase inhibitor 11.